Consider the following 56-residue polypeptide: MAHENVWFSHPRNFGKGSRQCRHCSSHSGLIRKYGLDLCRQCFREKAADIGFNKYR.

Positions 21, 24, 39, and 42 each coordinate Zn(2+).

Belongs to the universal ribosomal protein uS14 family. As to quaternary structure, component of the small ribosomal subunit. Mature ribosomes consist of a small (40S) and a large (60S) subunit. The 40S subunit contains about 32 different proteins and 1 molecule of RNA (18S). The 60S subunit contains 45 different proteins and 3 molecules of RNA (25S, 5.8S and 5S). Requires Zn(2+) as cofactor.

The protein resides in the cytoplasm. In terms of biological role, component of the ribosome, a large ribonucleoprotein complex responsible for the synthesis of proteins in the cell. The small ribosomal subunit (SSU) binds messenger RNAs (mRNAs) and translates the encoded message by selecting cognate aminoacyl-transfer RNA (tRNA) molecules. The large subunit (LSU) contains the ribosomal catalytic site termed the peptidyl transferase center (PTC), which catalyzes the formation of peptide bonds, thereby polymerizing the amino acids delivered by tRNAs into a polypeptide chain. The nascent polypeptides leave the ribosome through a tunnel in the LSU and interact with protein factors that function in enzymatic processing, targeting, and the membrane insertion of nascent chains at the exit of the ribosomal tunnel. This Candida albicans (strain SC5314 / ATCC MYA-2876) (Yeast) protein is Small ribosomal subunit protein uS14.